The primary structure comprises 188 residues: Elongation factor P (188 aa).

A disordered region spans residues 139 to 163; that stretch reads PVTKGQTASSSYKPATLSNGVRTQV. The segment covering 142–160 has biased composition (polar residues); sequence KGQTASSSYKPATLSNGVR.

Belongs to the elongation factor P family.

The protein resides in the cytoplasm. Its pathway is protein biosynthesis; polypeptide chain elongation. Functionally, involved in peptide bond synthesis. Stimulates efficient translation and peptide-bond synthesis on native or reconstituted 70S ribosomes in vitro. Probably functions indirectly by altering the affinity of the ribosome for aminoacyl-tRNA, thus increasing their reactivity as acceptors for peptidyl transferase. This is Elongation factor P from Methylobacterium nodulans (strain LMG 21967 / CNCM I-2342 / ORS 2060).